The primary structure comprises 397 residues: Acetyl-CoA acetyltransferase (397 aa).

The active-site Acyl-thioester intermediate is Cys95. CoA contacts are provided by Tyr187 and Lys230. Tyr187 is a K(+) binding site. The K(+) site is built by Ala246, Gly247, and Ala249. Ser250 is a CoA binding site. Val347 lines the K(+) pocket. Active-site proton acceptor residues include His351 and Cys379.

This sequence belongs to the thiolase-like superfamily. Thiolase family.

The protein localises to the peroxisome. It catalyses the reaction 2 acetyl-CoA = acetoacetyl-CoA + CoA. Its function is as follows. Essential for n-decane utilization. This Yarrowia lipolytica (strain CLIB 122 / E 150) (Yeast) protein is Acetyl-CoA acetyltransferase (PAT1).